We begin with the raw amino-acid sequence, 155 residues long: Sec-independent protein translocase protein TatB (155 aa).

The helical transmembrane segment at 1–21 (MIDLGISKIALIGAVALIVIG) threads the bilayer. 2 disordered regions span residues 81-103 (ASDF…LPGF) and 131-155 (SGIR…SRKA). Positions 89 to 98 (SETTGSTSSD) are enriched in polar residues.

Belongs to the TatB family. As to quaternary structure, the Tat system comprises two distinct complexes: a TatABC complex, containing multiple copies of TatA, TatB and TatC subunits, and a separate TatA complex, containing only TatA subunits. Substrates initially bind to the TatABC complex, which probably triggers association of the separate TatA complex to form the active translocon.

The protein localises to the cell inner membrane. Its function is as follows. Part of the twin-arginine translocation (Tat) system that transports large folded proteins containing a characteristic twin-arginine motif in their signal peptide across membranes. Together with TatC, TatB is part of a receptor directly interacting with Tat signal peptides. TatB may form an oligomeric binding site that transiently accommodates folded Tat precursor proteins before their translocation. This chain is Sec-independent protein translocase protein TatB, found in Polaromonas naphthalenivorans (strain CJ2).